A 370-amino-acid polypeptide reads, in one-letter code: UDP-N-acetylglucosamine--N-acetylmuramyl-(pentapeptide) pyrophosphoryl-undecaprenol N-acetylglucosamine transferase (370 aa).

UDP-N-acetyl-alpha-D-glucosamine-binding positions include 14–16, asparagine 125, arginine 168, serine 196, and glutamine 297; that span reads TGG.

This sequence belongs to the glycosyltransferase 28 family. MurG subfamily.

Its subcellular location is the cell inner membrane. It catalyses the reaction di-trans,octa-cis-undecaprenyl diphospho-N-acetyl-alpha-D-muramoyl-L-alanyl-D-glutamyl-meso-2,6-diaminopimeloyl-D-alanyl-D-alanine + UDP-N-acetyl-alpha-D-glucosamine = di-trans,octa-cis-undecaprenyl diphospho-[N-acetyl-alpha-D-glucosaminyl-(1-&gt;4)]-N-acetyl-alpha-D-muramoyl-L-alanyl-D-glutamyl-meso-2,6-diaminopimeloyl-D-alanyl-D-alanine + UDP + H(+). It functions in the pathway cell wall biogenesis; peptidoglycan biosynthesis. Cell wall formation. Catalyzes the transfer of a GlcNAc subunit on undecaprenyl-pyrophosphoryl-MurNAc-pentapeptide (lipid intermediate I) to form undecaprenyl-pyrophosphoryl-MurNAc-(pentapeptide)GlcNAc (lipid intermediate II). This chain is UDP-N-acetylglucosamine--N-acetylmuramyl-(pentapeptide) pyrophosphoryl-undecaprenol N-acetylglucosamine transferase, found in Nitrobacter hamburgensis (strain DSM 10229 / NCIMB 13809 / X14).